Here is a 114-residue protein sequence, read N- to C-terminus: uncharacterized protein (114 aa).

Residue Cys-10 is part of the active site.

The protein belongs to the ArsC family.

This is an uncharacterized protein from Haemophilus influenzae (strain ATCC 51907 / DSM 11121 / KW20 / Rd).